The following is a 432-amino-acid chain: Eukaryotic translation initiation factor 3 subunit M (432 aa).

The 173-residue stretch at 184 to 356 folds into the PCI domain; it reads EEEEAYQHIL…KVFLIHSVRY (173 aa). Basic and acidic residues-rich tracts occupy residues 392–401 and 423–432; these read AQQEAERKLV and QHRERNDNDD. Positions 392–432 are disordered; that stretch reads AQQEAERKLVEASTQHNNDRGNQRRGGNRGQQHRERNDNDD.

The protein belongs to the eIF-3 subunit M family. Component of the eukaryotic translation initiation factor 3 (eIF-3) complex.

It localises to the cytoplasm. Component of the eukaryotic translation initiation factor 3 (eIF-3) complex, which is involved in protein synthesis of a specialized repertoire of mRNAs and, together with other initiation factors, stimulates binding of mRNA and methionyl-tRNAi to the 40S ribosome. The eIF-3 complex specifically targets and initiates translation of a subset of mRNAs involved in cell proliferation. This is Eukaryotic translation initiation factor 3 subunit M from Pyricularia oryzae (strain 70-15 / ATCC MYA-4617 / FGSC 8958) (Rice blast fungus).